Consider the following 458-residue polypeptide: Cysteine--tRNA ligase (458 aa).

Cys-29 provides a ligand contact to Zn(2+). The 'HIGH' region signature appears at 31-41 (PTVYDNPHIGN). Positions 214, 239, and 243 each coordinate Zn(2+). Residues 272–276 (KMSKS) carry the 'KMSKS' region motif. An ATP-binding site is contributed by Lys-275.

It belongs to the class-I aminoacyl-tRNA synthetase family. Monomer. Zn(2+) is required as a cofactor.

The protein resides in the cytoplasm. It carries out the reaction tRNA(Cys) + L-cysteine + ATP = L-cysteinyl-tRNA(Cys) + AMP + diphosphate. The chain is Cysteine--tRNA ligase from Rickettsia bellii (strain OSU 85-389).